The chain runs to 236 residues: Phosphoribosylaminoimidazole-succinocarboxamide synthase (236 aa).

This sequence belongs to the SAICAR synthetase family.

It carries out the reaction 5-amino-1-(5-phospho-D-ribosyl)imidazole-4-carboxylate + L-aspartate + ATP = (2S)-2-[5-amino-1-(5-phospho-beta-D-ribosyl)imidazole-4-carboxamido]succinate + ADP + phosphate + 2 H(+). It functions in the pathway purine metabolism; IMP biosynthesis via de novo pathway; 5-amino-1-(5-phospho-D-ribosyl)imidazole-4-carboxamide from 5-amino-1-(5-phospho-D-ribosyl)imidazole-4-carboxylate: step 1/2. This chain is Phosphoribosylaminoimidazole-succinocarboxamide synthase, found in Campylobacter jejuni (strain RM1221).